A 238-amino-acid polypeptide reads, in one-letter code: MLGAELADTGLFVRFGALHFAIASVAVLLSALFVLLPFALPRLLAHKNLARAGVAILFLRLGLMLCGTLLDGRSWRNELPFHLCPAALISGSLYFITRRPIFFNLLYFWHFGSFVAVLYPDLTRAHTILYAYLFMLTHCLEPAMVVFSLLHLRERISKRGLQCAVLGFLLLAANALFWNRRLGANYLFISKYPLEILRVIRPFFVYQLLFVSALCLLMLVLYLPFRPSQHGRNQLFVI.

A run of 7 helical transmembrane segments spans residues 15–37, 50–69, 79–96, 101–118, 128–150, 163–183, and 203–225; these read FGALHFAIASVAVLLSALFVLLP, ARAGVAILFLRLGLMLCGTL, LPFHLCPAALISGSLYFI, IFFNLLYFWHFGSFVAVL, ILYAYLFMLTHCLEPAMVVFSLL, CAVLGFLLLAANALFWNRRLG, and FFVYQLLFVSALCLLMLVLYLPF.

It is found in the cell membrane. This is an uncharacterized protein from Treponema pallidum (strain Nichols).